The following is a 548-amino-acid chain: Chaperonin GroEL (548 aa).

ATP contacts are provided by residues 30 to 33, Lys51, 87 to 91, Gly415, 479 to 481, and Asp495; these read TLGP, DGTTT, and NAA.

It belongs to the chaperonin (HSP60) family. Forms a cylinder of 14 subunits composed of two heptameric rings stacked back-to-back. Interacts with the co-chaperonin GroES.

Its subcellular location is the cytoplasm. The catalysed reaction is ATP + H2O + a folded polypeptide = ADP + phosphate + an unfolded polypeptide.. Functionally, together with its co-chaperonin GroES, plays an essential role in assisting protein folding. The GroEL-GroES system forms a nano-cage that allows encapsulation of the non-native substrate proteins and provides a physical environment optimized to promote and accelerate protein folding. This is Chaperonin GroEL from Klebsiella aerogenes (strain ATCC 13048 / DSM 30053 / CCUG 1429 / JCM 1235 / KCTC 2190 / NBRC 13534 / NCIMB 10102 / NCTC 10006 / CDC 819-56) (Enterobacter aerogenes).